The following is a 238-amino-acid chain: CS1 fimbrial subunit B (238 aa).

The first 17 residues, 1 to 17 (MRKLFLSLLMIPFVAKA), serve as a signal peptide directing secretion.

It localises to the fimbrium. Functionally, might function as a shuttle protein in the transport of fimbria through the periplasmic space or might function as an adhesin. This is CS1 fimbrial subunit B (csoB) from Escherichia coli.